The primary structure comprises 67 residues: Metallothionein-B (67 aa).

The protein belongs to the metallothionein superfamily. Type 4 family.

Metallothioneins have a high content of cysteine residues that bind various heavy metals. This is Metallothionein-B from Sphaerechinus granularis (Purple sea urchin).